Here is a 911-residue protein sequence, read N- to C-terminus: Protein translocase subunit SecA (911 aa).

ATP contacts are provided by residues glutamine 87, 105 to 109 (GEGKT), and aspartate 512. A disordered region spans residues 861 to 893 (APGLESEQLSEEGAEVAVASAPVRNDQKLGRNE). The Zn(2+) site is built by cysteine 895, cysteine 897, cysteine 906, and histidine 907.

It belongs to the SecA family. In terms of assembly, monomer and homodimer. Part of the essential Sec protein translocation apparatus which comprises SecA, SecYEG and auxiliary proteins SecDF-YajC and YidC. Requires Zn(2+) as cofactor.

The protein resides in the cell inner membrane. The protein localises to the cytoplasm. It carries out the reaction ATP + H2O + cellular proteinSide 1 = ADP + phosphate + cellular proteinSide 2.. Part of the Sec protein translocase complex. Interacts with the SecYEG preprotein conducting channel. Has a central role in coupling the hydrolysis of ATP to the transfer of proteins into and across the cell membrane, serving both as a receptor for the preprotein-SecB complex and as an ATP-driven molecular motor driving the stepwise translocation of polypeptide chains across the membrane. The chain is Protein translocase subunit SecA from Pseudomonas putida (strain ATCC 700007 / DSM 6899 / JCM 31910 / BCRC 17059 / LMG 24140 / F1).